The primary structure comprises 415 residues: Phosphoribosylamine--glycine ligase (415 aa).

The region spanning 108–311 (KKIMKKYNIP…LMQHIIDLDE (204 aa)) is the ATP-grasp domain. 134–191 (IENCELPVVVKKDGLAAGKGVIIADTIEAARSAIEIMYGDEEEGTVVFETFLEGEEFS) lines the ATP pocket. 2 residues coordinate Mg(2+): Glu281 and Asn283.

The protein belongs to the GARS family. Mg(2+) is required as a cofactor. Requires Mn(2+) as cofactor.

It carries out the reaction 5-phospho-beta-D-ribosylamine + glycine + ATP = N(1)-(5-phospho-beta-D-ribosyl)glycinamide + ADP + phosphate + H(+). It participates in purine metabolism; IMP biosynthesis via de novo pathway; N(1)-(5-phospho-D-ribosyl)glycinamide from 5-phospho-alpha-D-ribose 1-diphosphate: step 2/2. In Staphylococcus aureus (strain Mu50 / ATCC 700699), this protein is Phosphoribosylamine--glycine ligase.